The chain runs to 261 residues: Pantothenate synthetase (261 aa).

Position 29–36 (29–36) interacts with ATP; sequence MGALHNGH. The active-site Proton donor is the histidine 36. Glutamine 60 contacts (R)-pantoate. Position 60 (glutamine 60) interacts with beta-alanine. 147–150 is a binding site for ATP; the sequence is GEKD. Glutamine 153 contacts (R)-pantoate. 184 to 187 contributes to the ATP binding site; that stretch reads LSSR.

Belongs to the pantothenate synthetase family. As to quaternary structure, homodimer.

Its subcellular location is the cytoplasm. The enzyme catalyses (R)-pantoate + beta-alanine + ATP = (R)-pantothenate + AMP + diphosphate + H(+). The protein operates within cofactor biosynthesis; (R)-pantothenate biosynthesis; (R)-pantothenate from (R)-pantoate and beta-alanine: step 1/1. Its function is as follows. Catalyzes the condensation of pantoate with beta-alanine in an ATP-dependent reaction via a pantoyl-adenylate intermediate. The polypeptide is Pantothenate synthetase (Francisella tularensis subsp. tularensis (strain FSC 198)).